The chain runs to 353 residues: Phosphate acyltransferase (353 aa).

The protein belongs to the PlsX family. In terms of assembly, homodimer. Probably interacts with PlsY.

It is found in the cytoplasm. The catalysed reaction is a fatty acyl-[ACP] + phosphate = an acyl phosphate + holo-[ACP]. Its pathway is lipid metabolism; phospholipid metabolism. Functionally, catalyzes the reversible formation of acyl-phosphate (acyl-PO(4)) from acyl-[acyl-carrier-protein] (acyl-ACP). This enzyme utilizes acyl-ACP as fatty acyl donor, but not acyl-CoA. The chain is Phosphate acyltransferase from Bradyrhizobium diazoefficiens (strain JCM 10833 / BCRC 13528 / IAM 13628 / NBRC 14792 / USDA 110).